The chain runs to 284 residues: Nucleotide-binding protein Shewmr7_3352 (284 aa).

Position 8 to 15 (8 to 15) interacts with ATP; sequence GRSGSGKS. 56-59 lines the GTP pocket; that stretch reads DVRN.

It belongs to the RapZ-like family.

In terms of biological role, displays ATPase and GTPase activities. This is Nucleotide-binding protein Shewmr7_3352 from Shewanella sp. (strain MR-7).